The primary structure comprises 89 residues: Phosphocarrier protein HPr (89 aa).

The region spanning 2–89 (AKFSAIITDK…TMIDTALIQG (88 aa)) is the HPr domain. Residue His-15 is the Pros-phosphohistidine intermediate of the active site. Ser-46 is subject to Phosphoserine; by HPrK/P.

It belongs to the HPr family.

The protein resides in the cytoplasm. Phosphorylation on Ser-46 inhibits the phosphoryl transfer from enzyme I to HPr. In terms of biological role, general (non sugar-specific) component of the phosphoenolpyruvate-dependent sugar phosphotransferase system (sugar PTS). This major carbohydrate active-transport system catalyzes the phosphorylation of incoming sugar substrates concomitantly with their translocation across the cell membrane. The phosphoryl group from phosphoenolpyruvate (PEP) is transferred to the phosphoryl carrier protein HPr by enzyme I. Phospho-HPr then transfers it to the PTS EIIA domain. Its function is as follows. P-Ser-HPr interacts with the catabolite control protein A (CcpA), forming a complex that binds to DNA at the catabolite response elements cre, operator sites preceding a large number of catabolite-regulated genes. Thus, P-Ser-HPr is a corepressor in carbon catabolite repression (CCR), a mechanism that allows bacteria to coordinate and optimize the utilization of available carbon sources. P-Ser-HPr also plays a role in inducer exclusion, in which it probably interacts with several non-PTS permeases and inhibits their transport activity. In Mycoplasma capricolum subsp. capricolum (strain California kid / ATCC 27343 / NCTC 10154), this protein is Phosphocarrier protein HPr (ptsH).